Consider the following 78-residue polypeptide: Small ribosomal subunit protein bS18 (78 aa).

Belongs to the bacterial ribosomal protein bS18 family. Part of the 30S ribosomal subunit. Forms a tight heterodimer with protein bS6.

Its function is as follows. Binds as a heterodimer with protein bS6 to the central domain of the 16S rRNA, where it helps stabilize the platform of the 30S subunit. In Lactobacillus johnsonii (strain CNCM I-12250 / La1 / NCC 533), this protein is Small ribosomal subunit protein bS18.